The chain runs to 1125 residues: Probable phospholipid-transporting ATPase IIB (1125 aa).

Residues 1–131 (MADGIPLNPV…IKNQKYNIVT (131 aa)) lie on the Cytoplasmic side of the membrane. Residues 132–152 (FVPGVLYQQFKFFLNLYFLVV) form a helical membrane-spanning segment. Over 153-161 (ACSQFVPSL) the chain is Extracellular. The chain crosses the membrane as a helical span at residues 162–182 (KIGYLYTYWAPLGFVLAVTMV). Topologically, residues 183-369 (REAVDEVRRC…LDLELNRLTK (187 aa)) are cytoplasmic. The chain crosses the membrane as a helical span at residues 370 to 390 (ALFLAQVVLSVVMVALQGFLG). The Extracellular portion of the chain corresponds to 391-395 (PWFRN). The helical transmembrane segment at 396 to 415 (LFRFVVLFSYIIPISLRVNL) threads the bilayer. The Cytoplasmic portion of the chain corresponds to 416-928 (DMGKSAYGWM…ALGQFVMHRG (513 aa)). Residue Asp-455 is the 4-aspartylphosphate intermediate of the active site. ATP contacts are provided by Asp-455, Lys-456, and Thr-457. Asp-455 serves as a coordination point for Mg(2+). Thr-457 is a Mg(2+) binding site. Low complexity predominate over residues 500–511 (QSNGSSASSTPS). Disordered regions lie at residues 500–525 (QSNGSSASSTPSRKPQPPAPKVRKSV) and 552–574 (GANAEPESTEADQDFSDDNRTYQ). Positions 558–567 (ESTEADQDFS) are enriched in acidic residues. Residues Glu-580, Phe-622, Lys-627, Lys-646, Arg-675, Thr-676, Thr-755, Gly-756, Asp-757, Arg-837, and Lys-843 each coordinate ATP. Asp-863 lines the Mg(2+) pocket. ATP-binding residues include Asn-866 and Asp-867. Asp-867 is a binding site for Mg(2+). A helical membrane pass occupies residues 929–949 (MIISTMQAVFSSIFYFASVPL). At 950 to 951 (YQ) the chain is on the extracellular side. Residues 952–972 (GFLMVGYATIYTMFPVFSLVL) traverse the membrane as a helical segment. Over 973-1001 (DQDVKPEMALLYPELYKDLTKGRSLSFKT) the chain is Cytoplasmic. The chain crosses the membrane as a helical span at residues 1002–1022 (FLIWVLISIYQGGILMYGALV). The Extracellular segment spans residues 1023–1030 (LFDQEFVH). A helical membrane pass occupies residues 1031 to 1051 (VVAISFTALILTELLMVALTI). Residues 1052–1055 (RTWH) are Cytoplasmic-facing. The chain crosses the membrane as a helical span at residues 1056-1076 (WLMVVAQLISLACYLASLAFL). At 1077 to 1088 (NEYFDLSFITTR) the chain is on the extracellular side. A helical transmembrane segment spans residues 1089–1109 (VFLWKVCVITLVSCLPLYIIK). Topologically, residues 1110-1125 (YLKRKFSPPSYSKLSS) are cytoplasmic.

The protein belongs to the cation transport ATPase (P-type) (TC 3.A.3) family. Type IV subfamily. It depends on Mg(2+) as a cofactor.

Its subcellular location is the golgi apparatus. It localises to the trans-Golgi network membrane. It carries out the reaction ATP + H2O + phospholipidSide 1 = ADP + phosphate + phospholipidSide 2.. The sequence is that of Probable phospholipid-transporting ATPase IIB (atp9b) from Danio rerio (Zebrafish).